The following is a 261-amino-acid chain: CD40 ligand (261 aa).

Over 1–22 the chain is Cytoplasmic; it reads MVETYHQPAPRSAATGLPVSMK. A helical; Signal-anchor for type II membrane protein membrane pass occupies residues 23–43; it reads IFMYLLTVFLITQMIGSALFA. The Extracellular segment spans residues 44–261; the sequence is VYLHRRLDKI…GFTSFGLLKL (218 aa). The THD domain maps to 122 to 261; the sequence is IAAHVISEAS…GFTSFGLLKL (140 aa). Cysteine 178 and cysteine 218 are oxidised to a cystine. Residue asparagine 240 is glycosylated (N-linked (GlcNAc...) asparagine).

Belongs to the tumor necrosis factor family. In terms of assembly, homotrimer. Interacts with CD28. CD40 ligand, soluble form: Exists as either a monomer or a homotrimer. Forms a ternary complex between CD40 and integrins for CD40-CD40LG signaling. In terms of processing, the soluble form derives from the membrane form by proteolytic processing.

It is found in the cell membrane. The protein localises to the cell surface. It localises to the secreted. Its function is as follows. Cytokine that acts as a ligand to CD40/TNFRSF5. Costimulates T-cell proliferation and cytokine production. Its cross-linking on T-cells generates a costimulatory signal which enhances the production of IL4 and IL10 in conjunction with the TCR/CD3 ligation and CD28 costimulation. Induces the activation of NF-kappa-B. Induces the activation of kinases MAPK8 and PAK2 in T-cells. Mediates B-cell proliferation in the absence of co-stimulus as well as IgE production in the presence of IL4. Involved in immunoglobulin class switching. In terms of biological role, acts as a ligand for integrins, specifically ITGA5:ITGB1 and ITGAV:ITGB3; both integrins and the CD40 receptor are required for activation of CD40-CD40LG signaling, which have cell-type dependent effects, such as B-cell activation, NF-kappa-B signaling and anti-apoptotic signaling. This Aotus trivirgatus (Three-striped night monkey) protein is CD40 ligand (CD40LG).